Reading from the N-terminus, the 366-residue chain is Chorismate synthase (366 aa).

The NADP(+) site is built by Arg48 and Arg54. Residues Arg125–Ser127, Asn242–Ala243, Gly287, Lys302–Ser306, and Arg328 contribute to the FMN site.

This sequence belongs to the chorismate synthase family. In terms of assembly, homotetramer. It depends on FMNH2 as a cofactor.

It carries out the reaction 5-O-(1-carboxyvinyl)-3-phosphoshikimate = chorismate + phosphate. It functions in the pathway metabolic intermediate biosynthesis; chorismate biosynthesis; chorismate from D-erythrose 4-phosphate and phosphoenolpyruvate: step 7/7. In terms of biological role, catalyzes the anti-1,4-elimination of the C-3 phosphate and the C-6 proR hydrogen from 5-enolpyruvylshikimate-3-phosphate (EPSP) to yield chorismate, which is the branch point compound that serves as the starting substrate for the three terminal pathways of aromatic amino acid biosynthesis. This reaction introduces a second double bond into the aromatic ring system. The polypeptide is Chorismate synthase (Rhodospirillum rubrum (strain ATCC 11170 / ATH 1.1.1 / DSM 467 / LMG 4362 / NCIMB 8255 / S1)).